A 422-amino-acid chain; its full sequence is Multifunctional CCA protein (422 aa).

The ATP site is built by Gly8 and Arg11. CTP-binding residues include Gly8 and Arg11. Mg(2+) contacts are provided by Asp21 and Asp23. ATP is bound by residues Arg91, Arg137, and Arg140. CTP-binding residues include Arg91, Arg137, and Arg140. Residues 228–329 (TGLHSLMALE…VKLLQSCDAW (102 aa)) form the HD domain. Positions 403-422 (FKQDNAPEAQEKGGEDVGLT) are disordered.

This sequence belongs to the tRNA nucleotidyltransferase/poly(A) polymerase family. Bacterial CCA-adding enzyme type 1 subfamily. Monomer. Can also form homodimers and oligomers. The cofactor is Mg(2+). Ni(2+) is required as a cofactor.

The catalysed reaction is a tRNA precursor + 2 CTP + ATP = a tRNA with a 3' CCA end + 3 diphosphate. The enzyme catalyses a tRNA with a 3' CCA end + 2 CTP + ATP = a tRNA with a 3' CCACCA end + 3 diphosphate. Catalyzes the addition and repair of the essential 3'-terminal CCA sequence in tRNAs without using a nucleic acid template. Adds these three nucleotides in the order of C, C, and A to the tRNA nucleotide-73, using CTP and ATP as substrates and producing inorganic pyrophosphate. tRNA 3'-terminal CCA addition is required both for tRNA processing and repair. Also involved in tRNA surveillance by mediating tandem CCA addition to generate a CCACCA at the 3' terminus of unstable tRNAs. While stable tRNAs receive only 3'-terminal CCA, unstable tRNAs are marked with CCACCA and rapidly degraded. This Hahella chejuensis (strain KCTC 2396) protein is Multifunctional CCA protein.